The chain runs to 256 residues: (E)-benzylidenesuccinyl-CoA hydratase (256 aa).

Glu110 functions as the Nucleophile in the catalytic mechanism. Residue Glu130 is the Proton acceptor of the active site.

Belongs to the enoyl-CoA hydratase/isomerase family. As to quaternary structure, homotrimer.

It catalyses the reaction (2S)-[(R)-hydroxy(phenyl)methyl]succinyl-CoA = (E)-2-benzylidenesuccinyl-CoA + H2O. It participates in xenobiotic degradation; toluene degradation. In terms of biological role, involved in an anaerobic toluene degradation pathway. Catalyzes the hydration of (E)-2-benzylidenesuccinyl-CoA to the corresponding alcohol intermediate, 2-(alpha-hydroxybenzyl)succinyl-CoA. Also accepts the N-acetylcysteamine (NAC) thioester of (E)-benzylidenesuccinate. The polypeptide is (E)-benzylidenesuccinyl-CoA hydratase (Thauera aromatica).